Here is a 362-residue protein sequence, read N- to C-terminus: Vignain (362 aa).

A signal peptide spans 1–20; sequence MAMKKLLWVVLSLSLVLGVA. Positions 21–126 are cleaved as a propeptide — activation peptide; it reads NSFDFHEKDL…SGTFMYEKVG (106 aa). 3 disulfide bridges follow: Cys-149–Cys-191, Cys-183–Cys-224, and Cys-282–Cys-334. Cys-152 is a catalytic residue. Residues His-288 and Asn-309 contribute to the active site. N-linked (GlcNAc...) asparagine glycosylation is found at Asn-326 and Asn-346. A propeptide spans 353–362 (removed in mature form); sequence GSLSSPKDEL. The Prevents secretion from ER motif lies at 359–362; sequence KDEL.

It belongs to the peptidase C1 family. The mature protein is not glycosylated. In terms of processing, the precursor stored in the endoplasmic reticulum lumen is processed during the transport to proteins bodies to two dominant mature forms that differ by a single amino acid residue at the N-terminus.

It localises to the endoplasmic reticulum lumen. It is found in the vacuole. The protein localises to the aleurone grain. Functionally, thought to be involved in the hydrolysis of stored seed proteins. In vitro, catalyzes the hydrolysis of proteins, such as azocasein. Shows a preferential cleavage for Asn-|-Xaa in small molecule substrates such as Boc-Asn-|-OPHNO(2). This Vigna mungo (Black gram) protein is Vignain.